A 369-amino-acid polypeptide reads, in one-letter code: S-(hydroxymethyl)glutathione dehydrogenase (369 aa).

Residues cysteine 40, histidine 62, cysteine 92, cysteine 95, cysteine 98, cysteine 106, and cysteine 169 each coordinate Zn(2+).

The protein belongs to the zinc-containing alcohol dehydrogenase family. Class-III subfamily. In terms of assembly, homodimer. Zn(2+) is required as a cofactor.

It localises to the cytoplasm. It catalyses the reaction S-(hydroxymethyl)glutathione + NADP(+) = S-formylglutathione + NADPH + H(+). The enzyme catalyses S-(hydroxymethyl)glutathione + NAD(+) = S-formylglutathione + NADH + H(+). It carries out the reaction a primary alcohol + NAD(+) = an aldehyde + NADH + H(+). The catalysed reaction is a secondary alcohol + NAD(+) = a ketone + NADH + H(+). It catalyses the reaction S-nitrosoglutathione + NADH + H(+) = S-(hydroxysulfenamide)glutathione + NAD(+). Its function is as follows. Has high formaldehyde dehydrogenase activity in the presence of glutathione and catalyzes the oxidation of normal alcohols in a reaction that is not GSH-dependent. In addition, hemithiolacetals other than those formed from GSH, including omega-thiol fatty acids, also are substrates. Also acts as a S-nitroso-glutathione reductase by catalyzing the NADH-dependent reduction of S-nitrosoglutathione. This Escherichia coli O1:K1 / APEC protein is S-(hydroxymethyl)glutathione dehydrogenase (frmA).